The following is a 92-amino-acid chain: UPF0235 protein CCA_00247 (92 aa).

This sequence belongs to the UPF0235 family.

The chain is UPF0235 protein CCA_00247 from Chlamydia caviae (strain ATCC VR-813 / DSM 19441 / 03DC25 / GPIC) (Chlamydophila caviae).